A 464-amino-acid chain; its full sequence is GDNF family receptor alpha-2 (464 aa).

A signal peptide spans 1 to 21 (MILANAFCLFFFLDETLRSLA). 14 disulfides stabilise this stretch: Cys-40-Cys-93, Cys-47-Cys-53, Cys-63-Cys-78, Cys-95-Cys-105, Cys-161-Cys-222, Cys-168-Cys-174, Cys-185-Cys-200, Cys-195-Cys-241, Cys-224-Cys-229, Cys-251-Cys-323, Cys-258-Cys-264, Cys-275-Cys-293, Cys-285-Cys-347, and Cys-325-Cys-335. Residue Asn-52 is glycosylated (N-linked (GlcNAc...) asparagine). Asn-357 is a glycosylation site (N-linked (GlcNAc...) asparagine). A disordered region spans residues 363–392 (MSPKGPTFSATQAPRVEKTPSLPDDLSDST). The span at 381–392 (TPSLPDDLSDST) shows a compositional bias: low complexity. N-linked (GlcNAc...) asparagine glycosylation is present at Asn-413. Ser-443 carries the GPI-anchor amidated serine lipid modification. The propeptide at 444–464 (CRARLSTALTALPLLMVTLAQ) is removed in mature form.

It belongs to the GDNFR family. As to quaternary structure, interacts with NRTN ligand and RET: forms a 2:2:2 ternary complex composed of NRTN ligand, GFRA2 and RET receptor. Also forms a 4:4:4 tetrameric complex composed of 4 copies of NRTN ligand, GFRA2 and RET receptor, which prevents endocytosis of RET. Interacts with SORL1. Neurons of the superior cervical and dorsal root ganglia, and adult brain and testis. Low level in the substantia nigra, spleen and adrenal gland. Isoform 1, isoform 2 and isoform 3 are all expressed in brain, liver, ileum, spleen, heart and kidney. In brain, isoform 1 is most abundant, isoform 2 slightly less and isoform 3 is lowest. No significant levels of isoform 1, isoform 2 or isoform 3 expression in testis.

Its subcellular location is the cell membrane. Receptor for neurturin (NRTN), a growth factor that supports the survival of sympathetic neurons. NRTN-binding leads to autophosphorylation and activation of the RET receptor. Also able to mediate GDNF signaling through the RET tyrosine kinase receptor. Its function is as follows. Participates in NRTN-induced 'Ser-727' phosphorylation of STAT3. This chain is GDNF family receptor alpha-2, found in Mus musculus (Mouse).